The sequence spans 1054 residues: Topoisomerase 1-associated factor 1 (1054 aa).

Disordered stretches follow at residues 522-543 (KADD…HESA), 823-846 (RDDK…EDDE), 865-953 (EMFA…TINL), and 968-1054 (VSDG…DDDE). A compositionally biased stretch (basic and acidic residues) spans 823-838 (RDDKERRGAGGDKEGS). A compositionally biased stretch (basic residues) spans 877-887 (KTKQKLKRKGT). Composition is skewed to basic and acidic residues over residues 890–901 (STREREKQRDYT), 928–953 (ERDR…TINL), and 979–1017 (TESH…HDSD).

The protein belongs to the timeless family. As to quaternary structure, component of the fork protection complex (FPC) consisting of TOF1 and CSM3.

The protein resides in the nucleus. Functionally, forms a fork protection complex (FPC) with CSM3 and which is required for chromosome segregation during meiosis and DNA damage repair. FPC coordinates leading and lagging strand synthesis and moves with the replication fork. FPC stabilizes replication forks in a configuration that is recognized by replication checkpoint sensors. This is Topoisomerase 1-associated factor 1 (TOF1) from Yarrowia lipolytica (strain CLIB 122 / E 150) (Yeast).